We begin with the raw amino-acid sequence, 235 residues long: C-&gt;U-editing enzyme APOBEC-1 (235 aa).

The CMP/dCMP-type deaminase domain occupies 10–131 (GDATLRRRIK…MDQQHRQGLK (122 aa)). A Zn(2+)-binding site is contributed by histidine 60. Catalysis depends on glutamate 62, which acts as the Proton donor. 2 residues coordinate Zn(2+): cysteine 92 and cysteine 95.

Belongs to the cytidine and deoxycytidylate deaminase family. Homodimer. Interacts with A1CF; form an mRNA editing complex. Interacts with RBM47; form an mRNA editing complex. Found in a complex with CELF2/CUGBP2 and A1CF. Interacts with HNRPAB. Interacts with SYNCRIP. It depends on Zn(2+) as a cofactor.

The protein localises to the cytoplasm. It is found in the nucleus. The enzyme catalyses a cytidine in mRNA + H2O + H(+) = a uridine in mRNA + NH4(+). It carries out the reaction cytidine(6666) in apoB mRNA + H2O + H(+) = uridine(6666) in apoB mRNA + NH4(+). Functionally, cytidine deaminase catalyzing the cytidine to uridine postranscriptional editing of a variety of mRNAs. Form complexes with cofactors that confer differential editing activity and selectivity. Responsible for the postranscriptional editing of a CAA codon for Gln to a UAA codon for stop in the apolipoprotein B mRNA. Also involved in CGA (Arg) to UGA (Stop) editing in the NF1 mRNA. May also play a role in the epigenetic regulation of gene expression by participating in DNA demethylation. In Monodelphis domestica (Gray short-tailed opossum), this protein is C-&gt;U-editing enzyme APOBEC-1.